A 159-amino-acid polypeptide reads, in one-letter code: NAD(P)H-quinone oxidoreductase subunit J, chloroplastic (159 aa).

It belongs to the complex I 30 kDa subunit family. In terms of assembly, NDH is composed of at least 16 different subunits, 5 of which are encoded in the nucleus.

The protein resides in the plastid. It is found in the chloroplast thylakoid membrane. It carries out the reaction a plastoquinone + NADH + (n+1) H(+)(in) = a plastoquinol + NAD(+) + n H(+)(out). The catalysed reaction is a plastoquinone + NADPH + (n+1) H(+)(in) = a plastoquinol + NADP(+) + n H(+)(out). In terms of biological role, NDH shuttles electrons from NAD(P)H:plastoquinone, via FMN and iron-sulfur (Fe-S) centers, to quinones in the photosynthetic chain and possibly in a chloroplast respiratory chain. The immediate electron acceptor for the enzyme in this species is believed to be plastoquinone. Couples the redox reaction to proton translocation, and thus conserves the redox energy in a proton gradient. In Populus trichocarpa (Western balsam poplar), this protein is NAD(P)H-quinone oxidoreductase subunit J, chloroplastic.